The chain runs to 149 residues: Epoxide hydrolase EphG (149 aa).

Residue Asp-93 is the Proton donor of the active site. Catalysis depends on Asp-122, which acts as the Proton acceptor.

The protein belongs to the limonene-1,2-epoxide hydrolase family. As to quaternary structure, homodimer. Is also present as monomer in solution.

The enzyme catalyses an epoxide + H2O = an ethanediol. It carries out the reaction 5,6alpha-epoxy-5alpha-cholestan-3beta-ol + H2O = 5alpha-cholestane-3beta,5,6beta-triol. It catalyses the reaction 5,6beta-epoxy-5beta-cholestan-3beta-ol + H2O = 5alpha-cholestane-3beta,5,6beta-triol. With respect to regulation, is inhibited by the anti-epileptic drug valpromide (Ki value of about 100 uM). Epoxide hydrolase capable of hydrolyzing long or bulky lipophilic epoxides such as 9,10-epoxystearic acid and cholesterol 5,6-oxide in vitro. The physiological substrates have yet to be identified, but could be fatty acid or steroid derivatives. This chain is Epoxide hydrolase EphG (ephG), found in Mycobacterium tuberculosis (strain ATCC 25618 / H37Rv).